The chain runs to 96 residues: MDILKEEFEIIKQRIKDKPEGSYVAYLTTADKKTPINKICEKVGEEATETILAAKDQDKQELIYESADLIFHILVLLANNGIEYEELMEEFERRRK.

Belongs to the PRA-PH family.

It is found in the cytoplasm. It catalyses the reaction 1-(5-phospho-beta-D-ribosyl)-ATP + H2O = 1-(5-phospho-beta-D-ribosyl)-5'-AMP + diphosphate + H(+). The protein operates within amino-acid biosynthesis; L-histidine biosynthesis; L-histidine from 5-phospho-alpha-D-ribose 1-diphosphate: step 2/9. In Methanococcus aeolicus (strain ATCC BAA-1280 / DSM 17508 / OCM 812 / Nankai-3), this protein is Phosphoribosyl-ATP pyrophosphatase.